A 331-amino-acid chain; its full sequence is 3'-5' exonuclease (331 aa).

The segment at glutamate 27–glutamate 92 is disordered. Residues glutamine 31–asparagine 43 are compositionally biased toward polar residues. The span at lysine 47 to proline 67 shows a compositional bias: basic and acidic residues. Phosphoserine is present on residues serine 80 and serine 88. Positions serine 118–glutamate 290 constitute a 3'-5' exonuclease domain. The Mg(2+) site is built by aspartate 140, glutamate 142, and aspartate 278.

This sequence belongs to the WRNexo family.

Its subcellular location is the nucleus. Its function is as follows. Has exonuclease activity on both single-stranded and duplex templates bearing overhangs, but not blunt ended duplex DNA, and cleaves in a 3'-5' direction. Essential for the formation of DNA replication focal centers. Has an important role in maintaining genome stability. In Drosophila grimshawi (Hawaiian fruit fly), this protein is 3'-5' exonuclease.